The primary structure comprises 160 residues: Phosphopantetheine adenylyltransferase (160 aa).

Threonine 11 is a substrate binding site. Residues 11-12 (TF) and histidine 19 contribute to the ATP site. 3 residues coordinate substrate: lysine 43, threonine 75, and arginine 89. ATP is bound by residues 90–92 (GLR), glutamate 100, and 125–131 (YSFLSSS).

It belongs to the bacterial CoaD family. In terms of assembly, homohexamer. It depends on Mg(2+) as a cofactor.

The protein resides in the cytoplasm. The catalysed reaction is (R)-4'-phosphopantetheine + ATP + H(+) = 3'-dephospho-CoA + diphosphate. It functions in the pathway cofactor biosynthesis; coenzyme A biosynthesis; CoA from (R)-pantothenate: step 4/5. Functionally, reversibly transfers an adenylyl group from ATP to 4'-phosphopantetheine, yielding dephospho-CoA (dPCoA) and pyrophosphate. The sequence is that of Phosphopantetheine adenylyltransferase from Listeria monocytogenes serotype 4b (strain CLIP80459).